Consider the following 161-residue polypeptide: Phosphopantetheine adenylyltransferase (161 aa).

Residue serine 11 participates in substrate binding. Residues 11-12 and histidine 19 each bind ATP; that span reads SF. Residues lysine 43, leucine 75, and arginine 89 each contribute to the substrate site. ATP is bound by residues 90–92, glutamate 100, and 125–131; these read GLR and YSFISSS.

This sequence belongs to the bacterial CoaD family. Homohexamer. Mg(2+) serves as cofactor.

The protein localises to the cytoplasm. The enzyme catalyses (R)-4'-phosphopantetheine + ATP + H(+) = 3'-dephospho-CoA + diphosphate. The protein operates within cofactor biosynthesis; coenzyme A biosynthesis; CoA from (R)-pantothenate: step 4/5. Functionally, reversibly transfers an adenylyl group from ATP to 4'-phosphopantetheine, yielding dephospho-CoA (dPCoA) and pyrophosphate. The protein is Phosphopantetheine adenylyltransferase of Staphylococcus saprophyticus subsp. saprophyticus (strain ATCC 15305 / DSM 20229 / NCIMB 8711 / NCTC 7292 / S-41).